The primary structure comprises 457 residues: PDZ and LIM domain protein 7 (457 aa).

One can recognise a PDZ domain in the interval 1–85 (MDSFKVVLEG…RLSLGLSRAQ (85 aa)). The residue at position 78 (serine 78) is a Phosphoserine. Disordered stretches follow at residues 82–142 (SRAQ…LVPD), 176–226 (TEFM…PWAV), and 239–258 (TSTV…LQSR). Arginine 103 carries the asymmetric dimethylarginine modification. A Phosphoserine modification is found at serine 111. Positions 208–221 (EPWPGPTAPSPTSR) are enriched in pro residues. Phosphoserine is present on serine 247. 3 consecutive LIM zinc-binding domains span residues 280-338 (PVCH…VRYA), 339-398 (PSCA…MFGT), and 399-457 (KCHG…FSHV).

In terms of assembly, binds via its LIM zinc-binding 3 domain (LIM 3) to endocytic codes of INSR, but not with those of IGF1R, LDLR, TFRC, or EGFR. Interacts with various PKC isoforms through the LIM zinc-binding domains. Binds to RET in a phosphorylation-independent manner via its LIM zinc-binding domain 2 (LIM 2). Probably part of a complex with SHC and the RET dimer. Interacts with TPM2. Interacts with TBX4 and TBX5. Isoform 1 and isoform 2 are expressed ubiquitously, however, isoform 2 predominates in skeletal muscle, isoform 1 is more abundant in lung, spleen, leukocytes and fetal liver.

It is found in the cytoplasm. It localises to the cytoskeleton. May function as a scaffold on which the coordinated assembly of proteins can occur. May play a role as an adapter that, via its PDZ domain, localizes LIM-binding proteins to actin filaments of both skeletal muscle and nonmuscle tissues. Involved in both of the two fundamental mechanisms of bone formation, direct bone formation (e.g. embryonic flat bones mandible and cranium), and endochondral bone formation (e.g. embryonic long bone development). Plays a role during fracture repair. Involved in BMP6 signaling pathway. The protein is PDZ and LIM domain protein 7 (PDLIM7) of Homo sapiens (Human).